Reading from the N-terminus, the 96-residue chain is Muconolactone Delta-isomerase 1 (96 aa).

It belongs to the muconolactone Delta-isomerase family. As to quaternary structure, homodecamer.

The catalysed reaction is (S)-muconolactone = (4,5-dihydro-5-oxofuran-2-yl)-acetate. It functions in the pathway aromatic compound metabolism; beta-ketoadipate pathway; 5-oxo-4,5-dihydro-2-furylacetate from catechol: step 3/3. This Acinetobacter lwoffii protein is Muconolactone Delta-isomerase 1 (catC1).